Consider the following 313-residue polypeptide: Dehydrodolichyl diphosphate synthase CPT5, chloroplastic (313 aa).

Residues 1–42 constitute a chloroplast transit peptide; the sequence is MAFSFQLQQVFPFPVKFCSQPKSIKLQIFPNLTKRLPIHPLA. Aspartate 89 is an active-site residue.

The protein belongs to the UPP synthase family. The cofactor is Mg(2+). As to expression, expressed in leaf trichomes, stem trichomes and old leaves. Expressed at low levels in young leaves and flowers.

It is found in the plastid. The protein resides in the chloroplast. The catalysed reaction is n isopentenyl diphosphate + (2E,6E)-farnesyl diphosphate = a di-trans,poly-cis-polyprenyl diphosphate + n diphosphate. Catalyzes cis-prenyl chain elongation to produce the polyprenyl backbone of dolichol, a glycosyl carrier-lipid required for the biosynthesis of several classes of glycoprotein. This chain is Dehydrodolichyl diphosphate synthase CPT5, chloroplastic, found in Solanum lycopersicum (Tomato).